The sequence spans 1226 residues: Phosphatidylinositol 3,4,5-trisphosphate 5-phosphatase 2B (1226 aa).

Residues 6–102 (WYHRDISRVR…GLVAPLLYPV (97 aa)) enclose the SH2 domain. Positions 106-144 (SEANDESSDGDDEKPGSTFANSPPRAISPTATSPPSSSA) are disordered. Residues 108-117 (ANDESSDGDD) show a composition bias toward acidic residues. Positions 127 to 144 (SPPRAISPTATSPPSSSA) are enriched in low complexity. Positions 906–909 (NPAY) match the NPXY motif motif. Phosphotyrosine is present on Tyr-909. Disordered stretches follow at residues 945-964 (RVTG…DFTE) and 985-1035 (SSAA…LSGK). Low complexity predominate over residues 1011-1025 (HSSNSSLQLQSHKNN). Residues 1163–1226 (GAPETVRELL…ILENLPKIWD (64 aa)) enclose the SAM domain.

The protein belongs to the inositol 1,4,5-trisphosphate 5-phosphatase family. In terms of processing, tyrosine phosphorylated by the members of the SRC family after exposure to a diverse array of extracellular stimuli.

The protein localises to the cytoplasm. The protein resides in the cytosol. It localises to the cytoskeleton. Its subcellular location is the membrane. It is found in the cell projection. The protein localises to the filopodium. The protein resides in the lamellipodium. It localises to the nucleus. Its subcellular location is the nucleus speckle. The catalysed reaction is a 1,2-diacyl-sn-glycero-3-phospho-(1D-myo-inositol-3,4,5-trisphosphate) + H2O = a 1,2-diacyl-sn-glycero-3-phospho-(1D-myo-inositol-3,4-bisphosphate) + phosphate. Functionally, phosphatidylinositol (PtdIns) phosphatase that specifically hydrolyzes the 5-phosphate of phosphatidylinositol-3,4,5-trisphosphate (PtdIns(3,4,5)P3) to produce PtdIns(3,4)P2, thereby negatively regulating the PI3K (phosphoinositide 3-kinase) pathways. Plays a central role in regulation of PI3K-dependent insulin signaling, although the precise molecular mechanisms and signaling pathways remain unclear. Part of a signaling pathway that regulates actin cytoskeleton remodeling. Required for the maintenance and dynamic remodeling of actin structures as well as in endocytosis, having a major impact on ligand-induced EGFR internalization and degradation. Participates in regulation of cortical and submembraneous actin. Regulates cell adhesion and cell spreading. Acts as a negative regulator of the FC-gamma-RIIA receptor (FCGR2A). Mediates signaling from the FC-gamma-RIIB receptor (FCGR2B), playing a central role in terminating signal transduction from activating immune/hematopoietic cell receptor systems. May also hydrolyze PtdIns(1,3,4,5)P4, and could thus affect the levels of the higher inositol polyphosphates like InsP6. In Danio rerio (Zebrafish), this protein is Phosphatidylinositol 3,4,5-trisphosphate 5-phosphatase 2B (inppl1b).